The sequence spans 347 residues: Isopentenyl-diphosphate delta-isomerase (347 aa).

A substrate-binding site is contributed by 11–12 (RK). Residues 72–74 (AMT), Ser102, and Asn131 each bind FMN. Gln161 lines the substrate pocket. Glu162 serves as a coordination point for Mg(2+). FMN is bound by residues Lys192, Thr222, and 287–288 (AG).

It belongs to the IPP isomerase type 2 family. As to quaternary structure, homooctamer. Dimer of tetramers. The cofactor is FMN. Requires NADPH as cofactor. It depends on Mg(2+) as a cofactor.

It localises to the cytoplasm. It catalyses the reaction isopentenyl diphosphate = dimethylallyl diphosphate. Functionally, involved in the biosynthesis of isoprenoids. Catalyzes the 1,3-allylic rearrangement of the homoallylic substrate isopentenyl (IPP) to its allylic isomer, dimethylallyl diphosphate (DMAPP). This chain is Isopentenyl-diphosphate delta-isomerase, found in Lactococcus lactis subsp. lactis (strain IL1403) (Streptococcus lactis).